Consider the following 437-residue polypeptide: MSGLARLQRLQKFGFLMVSASANRPIQRYQCSRTEKPQKRTSANALLNHLIFKIKSTGPITVSEYMREVLTNPVKGYYMHNDMLGEHGDFVTSPEISQIFGELLGVWCISEWVSAGKPKAIQLVELGPGRGTLTDDLLRVFSNFGRLLDSCDISVHLVEVSPKLSDIQAQRLTGKSIEVELDSNSPVYKNGITKTGRPVCWYQDIQDVPNGYSFYIAHEFFDALPIHKLQKIKDGWREMLIDIDPKLPDKLRFVLGSNMSLVAKTFVQDDEPRDHVEVCPSAAVIIQKLAQQINSYGGAALIADYGHMGEKTDTFRGFRAHQLHDVLTDPGTADLTADVDFNFMRRMVGEAASCLGPVTQHVFLKNMGIDIRLKVLLEKSNDVTVQKQLIHGYNVLMNPDQMGQRFKFFSVVPHSRLKNTLKTKMPPVAGFSTLLMT.

The transit peptide at 1 to 42 directs the protein to the mitochondrion; sequence MSGLARLQRLQKFGFLMVSASANRPIQRYQCSRTEKPQKRTS.

It belongs to the NDUFAF7 family.

Its subcellular location is the mitochondrion. The enzyme catalyses L-arginyl-[protein] + 2 S-adenosyl-L-methionine = N(omega),N(omega)'-dimethyl-L-arginyl-[protein] + 2 S-adenosyl-L-homocysteine + 2 H(+). In terms of biological role, arginine methyltransferase involved in the assembly or stability of mitochondrial NADH:ubiquinone oxidoreductase complex (complex I). Acts by mediating symmetric dimethylation of 'Arg-118' of ndufs2 after it assembles into the complex I, stabilizing the early intermediate complex. The chain is Protein arginine methyltransferase NDUFAF7, mitochondrial from Xenopus laevis (African clawed frog).